The primary structure comprises 91 residues: MRRCIHIKERKIHMTNIVDRNVTFILTVVHKYVRYVPHTVANDAHNLVHLAHLIHFIIYFFIIRDVRKKKKKKKKNRTIYFFSNVYARHIK.

This is an uncharacterized protein from Vaccinia virus (strain Copenhagen) (VACV).